A 63-amino-acid polypeptide reads, in one-letter code: Large ribosomal subunit protein bL28 (63 aa).

Belongs to the bacterial ribosomal protein bL28 family.

The chain is Large ribosomal subunit protein bL28 from Thermomicrobium roseum (strain ATCC 27502 / DSM 5159 / P-2).